A 962-amino-acid polypeptide reads, in one-letter code: Glycine dehydrogenase (decarboxylating) (962 aa).

Lysine 709 carries the N6-(pyridoxal phosphate)lysine modification.

It belongs to the GcvP family. In terms of assembly, the glycine cleavage system is composed of four proteins: P, T, L and H. Pyridoxal 5'-phosphate is required as a cofactor.

The enzyme catalyses N(6)-[(R)-lipoyl]-L-lysyl-[glycine-cleavage complex H protein] + glycine + H(+) = N(6)-[(R)-S(8)-aminomethyldihydrolipoyl]-L-lysyl-[glycine-cleavage complex H protein] + CO2. The glycine cleavage system catalyzes the degradation of glycine. The P protein binds the alpha-amino group of glycine through its pyridoxal phosphate cofactor; CO(2) is released and the remaining methylamine moiety is then transferred to the lipoamide cofactor of the H protein. The chain is Glycine dehydrogenase (decarboxylating) from Shewanella frigidimarina (strain NCIMB 400).